Here is a 111-residue protein sequence, read N- to C-terminus: Phosphoribosyl-ATP pyrophosphatase (111 aa).

This sequence belongs to the PRA-PH family.

The protein localises to the cytoplasm. The enzyme catalyses 1-(5-phospho-beta-D-ribosyl)-ATP + H2O = 1-(5-phospho-beta-D-ribosyl)-5'-AMP + diphosphate + H(+). It functions in the pathway amino-acid biosynthesis; L-histidine biosynthesis; L-histidine from 5-phospho-alpha-D-ribose 1-diphosphate: step 2/9. The sequence is that of Phosphoribosyl-ATP pyrophosphatase from Pseudomonas entomophila (strain L48).